A 202-amino-acid polypeptide reads, in one-letter code: 3-isopropylmalate dehydratase small subunit (202 aa).

Belongs to the LeuD family. LeuD type 1 subfamily. Heterodimer of LeuC and LeuD.

The catalysed reaction is (2R,3S)-3-isopropylmalate = (2S)-2-isopropylmalate. It functions in the pathway amino-acid biosynthesis; L-leucine biosynthesis; L-leucine from 3-methyl-2-oxobutanoate: step 2/4. Its function is as follows. Catalyzes the isomerization between 2-isopropylmalate and 3-isopropylmalate, via the formation of 2-isopropylmaleate. This chain is 3-isopropylmalate dehydratase small subunit, found in Paenarthrobacter aurescens (strain TC1).